We begin with the raw amino-acid sequence, 312 residues long: Glyoxylate/hydroxypyruvate reductase A (312 aa).

Arg227 is an active-site residue. His275 (proton donor) is an active-site residue.

This sequence belongs to the D-isomer specific 2-hydroxyacid dehydrogenase family. GhrA subfamily.

The protein localises to the cytoplasm. It catalyses the reaction glycolate + NADP(+) = glyoxylate + NADPH + H(+). The catalysed reaction is (R)-glycerate + NAD(+) = 3-hydroxypyruvate + NADH + H(+). It carries out the reaction (R)-glycerate + NADP(+) = 3-hydroxypyruvate + NADPH + H(+). Catalyzes the NADPH-dependent reduction of glyoxylate and hydroxypyruvate into glycolate and glycerate, respectively. This chain is Glyoxylate/hydroxypyruvate reductase A, found in Salmonella enteritidis PT4 (strain P125109).